A 321-amino-acid polypeptide reads, in one-letter code: Glucokinase (321 aa).

Residue 8–13 (GDVGGT) coordinates ATP.

Belongs to the bacterial glucokinase family.

The protein localises to the cytoplasm. The enzyme catalyses D-glucose + ATP = D-glucose 6-phosphate + ADP + H(+). This is Glucokinase from Shigella boydii serotype 18 (strain CDC 3083-94 / BS512).